The primary structure comprises 171 residues: uncharacterized protein (171 aa).

Residues Ala30 to Leu97 form the HTH gntR-type domain. Positions Glu57–Ala76 form a DNA-binding region, H-T-H motif.

This is an uncharacterized protein from Agrobacterium vitis (Rhizobium vitis).